The following is a 712-amino-acid chain: Sterol uptake control protein 2 (712 aa).

Residues 1–19 (MMMTVKQESPNSTLNTSEF) are compositionally biased toward polar residues. The disordered stretch occupies residues 1–52 (MMMTVKQESPNSTLNTSEFSSDENLKTNNSEPPKKVSKSSTGKRKYHQKSRN). Residues 35–50 (KVSKSSTGKRKYHQKS) show a composition bias toward basic residues. Positions 54 to 81 (CSTCKKRRVKCDEQRPVCGNCTKLKLDC) form a DNA-binding region, zn(2)-C6 fungal-type. Disordered stretches follow at residues 95–150 (KKDI…VIPP) and 236–342 (TTVP…ANPL). Composition is skewed to polar residues over residues 113–143 (STVSAASDSESTTQQATPSLTPSPNHSQDIK), 252–306 (RKSQ…SGSP), and 326–337 (KSLPNISPNMSI).

The protein localises to the nucleus. Functionally, transcription factor involved in the regulation of ergosterol biosynthetic genes such as ERG2 and ERG11 through direct binding to sterol response elements (SREs) in the promoters. Also binds to its own promoter on 2 cis-acting elements to promote autoregulation. Regulates sterol uptake across the plasma membrane. Acts as a major regulator of ascorbic acid-induced response. Plays a role in the triggering of pyroptosis, an inflammasome-mediated programmed cell death pathway in macrophages, allowing macrophages escaping. The polypeptide is Sterol uptake control protein 2 (Candida albicans (strain SC5314 / ATCC MYA-2876) (Yeast)).